The following is a 503-amino-acid chain: Maturase K (503 aa).

Belongs to the intron maturase 2 family. MatK subfamily.

The protein localises to the plastid. The protein resides in the chloroplast. Its function is as follows. Usually encoded in the trnK tRNA gene intron. Probably assists in splicing its own and other chloroplast group II introns. This chain is Maturase K, found in Rosa canina (Dog rose).